The chain runs to 514 residues: Contact site A protein (514 aa).

The signal sequence occupies residues Met1–Ser19. Residues Ala20–Ile453 are globular. The IPT/TIG 1 domain maps to Pro21–Thr104. 5 N-linked (GlcNAc...) asparagine glycosylation sites follow: Asn128, Asn137, Asn207, Asn294, and Asn399. Residues Pro191 to Asn283 enclose the IPT/TIG 2 domain. Composition is skewed to low complexity over residues Thr446 to Pro475 and Ser483 to Ala494. The interval Thr446–Ala494 is disordered. 2 repeat units span residues Thr462–Pro469 and Thr472–Pro479. The interval Thr462–Pro479 is 2 X 8 AA repeats, Pro-rich. Ser492 is lipidated: GPI-like-anchor amidated serine. Positions Ser493–Ile514 are cleaved as a propeptide — removed in mature form.

Post-translationally, phosphorylated on serine and N-glycosylated with two types of oligosaccharide chains. In terms of processing, the GPI-like-anchor contains a phosphoceramide group, rather than a phosphatidyl group.

It localises to the cell membrane. This cell-surface glycoprotein mediates cell-cell binding via homophilic interaction. The chain is Contact site A protein (csaA) from Dictyostelium discoideum (Social amoeba).